We begin with the raw amino-acid sequence, 160 residues long: Serine-protein kinase RsbW (160 aa).

This sequence belongs to the anti-sigma-factor family.

It catalyses the reaction L-seryl-[protein] + ATP = O-phospho-L-seryl-[protein] + ADP + H(+). The enzyme catalyses L-threonyl-[protein] + ATP = O-phospho-L-threonyl-[protein] + ADP + H(+). In terms of biological role, negative regulator of sigma-B activity. Phosphorylates and inactivates its specific antagonist protein, RsbV. Upon phosphorylation of RsbV, RsbW is released and binds to sigma-B, thereby blocking its ability to form an RNA polymerase holoenzyme (E-sigma-B). This Bacillus cereus (strain AH187) protein is Serine-protein kinase RsbW.